Consider the following 450-residue polypeptide: tRNA modification GTPase MnmE (450 aa).

Positions 25, 83, and 122 each coordinate (6S)-5-formyl-5,6,7,8-tetrahydrofolate. In terms of domain architecture, TrmE-type G spans 218-377 (GFKVAIIGKP…QMEALLDSIG (160 aa)). Residue Asn228 coordinates K(+). Residues 228 to 233 (NVGKSS), 247 to 253 (SDIAGTT), and 272 to 275 (DTAG) contribute to the GTP site. Ser232 contacts Mg(2+). Ser247, Ile249, and Thr252 together coordinate K(+). Thr253 is a Mg(2+) binding site. Residue Lys450 participates in (6S)-5-formyl-5,6,7,8-tetrahydrofolate binding.

The protein belongs to the TRAFAC class TrmE-Era-EngA-EngB-Septin-like GTPase superfamily. TrmE GTPase family. As to quaternary structure, homodimer. Heterotetramer of two MnmE and two MnmG subunits. Requires K(+) as cofactor.

The protein resides in the cytoplasm. Functionally, exhibits a very high intrinsic GTPase hydrolysis rate. Involved in the addition of a carboxymethylaminomethyl (cmnm) group at the wobble position (U34) of certain tRNAs, forming tRNA-cmnm(5)s(2)U34. This is tRNA modification GTPase MnmE from Sulfurovum sp. (strain NBC37-1).